The chain runs to 1670 residues: Collagen alpha-3(IV) chain (1670 aa).

The N-terminal stretch at 1–28 is a signal peptide; the sequence is MSARTAPRPQVLLLPLLLVLLAAAPAAS. The interval 29 to 42 is 7S domain; sequence KGCVCKDKGQCFCD. Residues 43–1438 form a triple-helical region region; sequence GAKGEKGEKG…KGKRGDSGSP (1396 aa). 3 disordered regions span residues 49–78, 167–469, and 502–1442; these read GEKGFPGPPGSPGQKGFTGPEGLPGPQGPK, LDAK…DGPK, and GRQG…ATWT. Residues 176–200 show a composition bias toward pro residues; sequence PGAPGPQGLPGPPGFPGPVGPPGPP. Positions 202-212 are enriched in low complexity; the sequence is FFGFPGAMGPR. The segment covering 217–231 has biased composition (basic and acidic residues); it reads HMGERVIGHKGERGV. Over residues 242–251 the composition is skewed to low complexity; that stretch reads GTVIVTLTGP. Residue Asn-253 is glycosylated (N-linked (GlcNAc...) asparagine). A compositionally biased stretch (basic and acidic residues) spans 253–266; the sequence is NRTDLKGEKGDKGA. Positions 382–394 are enriched in low complexity; that stretch reads SPGSSRPGLRGAP. Over residues 402–411 the composition is skewed to basic and acidic residues; the sequence is SKGERGRPGK. The segment covering 415 to 428 has biased composition (low complexity); sequence GTPGSPGCAGSPGL. Pro residues-rich tracts occupy residues 429 to 438, 598 to 618, and 654 to 675; these read PGSPGPPGPP, PGDPGSPGSPGPAGPAGPPGY, and VPGPPGPPGPPGHPGPQGPPGI. Residues 791 to 793 carry the Cell attachment site motif; it reads RGD. Residues 900–909 are compositionally biased toward pro residues; it reads IGPPGPPGNP. Over residues 974 to 987 the composition is skewed to low complexity; the sequence is VPGMPGLKGLKGLP. Positions 996–998 match the Cell attachment site motif; it reads RGD. Low complexity-rich tracts occupy residues 1013–1025, 1094–1105, and 1118–1133; these read IPGSMGNMGMPGS, LGPAGPEGAPGS, and HGDLGFKGIKGLLGPP. Over residues 1135 to 1148 the composition is skewed to pro residues; it reads IRGPPGLPGFPGSP. A Cell attachment site motif is present at residues 1154–1156; it reads RGD. 2 stretches are compositionally biased toward low complexity: residues 1230 to 1250 and 1290 to 1299; these read PGAIIPGQTGNRGPPGSRGSP and PPGRLGAPGT. Positions 1306 to 1308 match the Cell attachment site motif; the sequence is RGD. Residues 1332-1341 show a composition bias toward pro residues; it reads PPGPIGPKGP. 2 consecutive short sequence motifs (cell attachment site) follow at residues 1345–1347 and 1432–1434; these read RGD. The interval 1427-1444 is epitope recognized by Goodpasture antibodies; sequence GLKGKRGDSGSPATWTTR. One can recognise a Collagen IV NC1 domain in the interval 1445 to 1669; the sequence is GFVFTRHSQT…SRCQVCMKKR (225 aa). 6 cysteine pairs are disulfide-bonded: Cys-1460-Cys-1551, Cys-1493-Cys-1548, Cys-1505-Cys-1511, Cys-1570-Cys-1665, Cys-1604-Cys-1662, and Cys-1616-Cys-1622. Positions 1479–1557 are required for the anti-angiogenic activity of tumstatin; it reads NQRAHGQDLG…CTVCEGPAIA (79 aa). Residue Met-1533 forms an S-Lysyl-methionine sulfilimine (Met-Lys) (interchain with K-1651) linkage. A required for the anti-tumor cell activity of tumstatin region spans residues 1610-1628; the sequence is ASPFLECHGRGTCNYYSNS. Lys-1651 is covalently cross-linked (S-Lysyl-methionine sulfilimine (Lys-Met) (interchain with M-1533)).

This sequence belongs to the type IV collagen family. In terms of assembly, there are six type IV collagen isoforms, alpha 1(IV)-alpha 6(IV), each of which can form a triple helix structure with 2 other chains to generate type IV collagen network. The alpha 3(IV) chain forms a triple helical protomer with alpha 4(IV) and alpha 5(IV); this triple helical structure dimerizes through NC1-NC1 domain interactions such that the alpha 3(IV), alpha 4(IV) and alpha 5(IV) chains of one protomer connect with the alpha 5(IV), alpha 4(IV) and alpha 3(IV) chains of the opposite promoter, respectively. Interacts with ITGB3. Associates with LAMB2 at the neuromuscular junction and in GBM. Post-translationally, prolines at the third position of the tripeptide repeating unit (G-X-Y) are hydroxylated in some or all of the chains. In terms of processing, isoform 2 contains an additional N-linked glycosylation site. Type IV collagens contain numerous cysteine residues which are involved in inter- and intramolecular disulfide bonding. 12 of these, located in the NC1 domain, are conserved in all known type IV collagens. Post-translationally, the trimeric structure of the NC1 domains is stabilized by covalent bonds between Lys and Met residues. In terms of processing, phosphorylated. Thought to be phosphorylated by CERT, but CERT does not have kinase activity. In terms of tissue distribution, alpha 3 and alpha 4 type IV collagens are colocalized and present in kidney, eye, basement membranes of lens capsule, cochlea, lung, skeletal muscle, aorta, synaptic fibers, fetal kidney and fetal lung. PubMed:8083201 reports similar levels of expression of alpha 3 and alpha 4 type IV collagens in kidney, but PubMed:7523402 reports that in kidney levels of alpha 3 type IV collagen are significantly lower than those of alpha 4 type IV collagen. According to PubMed:8083201, alpha 3 type IV collagen is not detected in heart, brain, placenta, liver, pancreas, extrasynaptic muscle fibers, endoneurial and perineurial nerves, fetal brain, fetal heart and fetal liver. According to PubMed:7523402, alpha 3 type IV collagen is strongly expressed in pancreas, neuroretina and calvaria and not expressed in adrenal, ileum and skin. Isoform 1 and isoform 3 are strongly expressed in kidney, lung, suprarenal capsule, muscle and spleen, in each of these tissues isoform 1 is more abundant than isoform 3. Isoform 1 and isoform 3 are expressed at low levels in artery, fat, pericardium and peripherical nerve, but not in placenta, mesangium, skin, pleura and cultured umbilical endothelial cells.

Its subcellular location is the secreted. The protein localises to the extracellular space. It localises to the extracellular matrix. It is found in the basement membrane. Functionally, type IV collagen is the major structural component of glomerular basement membranes (GBM), forming a 'chicken-wire' meshwork together with laminins, proteoglycans and entactin/nidogen. Tumstatin, a cleavage fragment corresponding to the collagen alpha 3(IV) NC1 domain, possesses both anti-angiogenic and anti-tumor cell activity; these two anti-tumor properties may be regulated via RGD-independent ITGB3-mediated mechanisms. The protein is Collagen alpha-3(IV) chain (COL4A3) of Homo sapiens (Human).